The chain runs to 109 residues: Large ribosomal subunit protein uL22 (109 aa).

It belongs to the universal ribosomal protein uL22 family. Part of the 50S ribosomal subunit.

In terms of biological role, this protein binds specifically to 23S rRNA; its binding is stimulated by other ribosomal proteins, e.g. L4, L17, and L20. It is important during the early stages of 50S assembly. It makes multiple contacts with different domains of the 23S rRNA in the assembled 50S subunit and ribosome. Functionally, the globular domain of the protein is located near the polypeptide exit tunnel on the outside of the subunit, while an extended beta-hairpin is found that lines the wall of the exit tunnel in the center of the 70S ribosome. The protein is Large ribosomal subunit protein uL22 of Cupriavidus necator (strain ATCC 17699 / DSM 428 / KCTC 22496 / NCIMB 10442 / H16 / Stanier 337) (Ralstonia eutropha).